The primary structure comprises 57 residues: uncharacterized protein (57 aa).

The helical transmembrane segment at phenylalanine 10–leucine 27 threads the bilayer. A coiled-coil region spans residues lysine 28–glutamate 55.

The protein localises to the membrane. This is an uncharacterized protein from Schizosaccharomyces pombe (strain 972 / ATCC 24843) (Fission yeast).